A 485-amino-acid chain; its full sequence is Acyltransferase cm3D (485 aa).

His169 functions as the Proton acceptor in the catalytic mechanism.

This sequence belongs to the plant acyltransferase family. Monomer.

It participates in secondary metabolite biosynthesis. In terms of biological role, acyltransferase; part of the gene cluster that mediates the biosynthesis of beauveriolides I and III, cyclodepsipeptides acting as inhibitors of the acyl-CoA:cholesterol acyltransferase. The HR-PKS cm3B initiates the biosynthesis of beauveriolides by iteratively catalyzing the formation of the linear polyketide chain. The ATP-dependent acetyl-CoA ligase cm3D converts the polyketide carboxylic acid to a CoA thioester which id shuttled to the first T domain in the NRPS cm3A by the acetyltransferase cm3C. Cm3A contains 13 domains and assembles the polyketide chain, L-phenylalanine, L-alanine, and D-leucine (or D-allo-isoleucine) to form beauveriolide I (or beauveriolide III). The production of both beauveriolides I and III suggests the substrate adaptability of cm3B, using different amino acids as substrates. This Cordyceps militaris (strain CM01) (Caterpillar fungus) protein is Acyltransferase cm3D.